The chain runs to 442 residues: Kelch domain-containing protein 10 (442 aa).

The disordered stretch occupies residues 1-57; the sequence is MSAAQGWDRNRRRGGGAAGAGGGGSGAGGGSGGSGGRGTGQLNRFVQLSGRPHLPGK. Arg-13 is modified (omega-N-methylarginine). Over residues 15 to 39 the composition is skewed to gly residues; it reads GGAAGAGGGGSGAGGGSGGSGGRGT. Kelch repeat units follow at residues 87–154, 155–198, 199–260, 261–319, 320–364, and 365–403; these read RPPP…PREL, ASMS…ALLS, CRGK…PEER, YRHE…RRCH, SCVQ…PEPV, and YFHC…LVVP. The interaction with CUL2 stretch occupies residues 401–442; it reads VVPSLLELAWEKLLAAFPNLANLSRTQLLHLGLTQGLIERLK.

The protein belongs to the KLHDC10 family. As to quaternary structure, component of a CRL2 E3 ubiquitin-protein ligase complex, also named ECS (Elongin BC-CUL2/5-SOCS-box protein) complex, composed of CUL2, Elongin BC (ELOB and ELOC), RBX1 and substrate-specific adapter KLHDC10. Interacts (via the 6 Kelch repeats) with PPP5C.

The protein localises to the nucleus. The protein resides in the cytoplasm. It functions in the pathway protein modification; protein ubiquitination. Substrate-recognition component of a Cul2-RING (CRL2) E3 ubiquitin-protein ligase complex of the DesCEND (destruction via C-end degrons) pathway, which recognizes a C-degron located at the extreme C-terminus of target proteins, leading to their ubiquitination and degradation. The C-degron recognized by the DesCEND pathway is usually a motif of less than ten residues and can be present in full-length proteins, truncated proteins or proteolytically cleaved forms. The CRL2(KLHDC10) complex specifically recognizes proteins with a proline-glycine (Pro-Gly) or an alanine tail (CAT tail) at the C-terminus, leading to their ubiquitination and degradation. The CRL2(KLHDC10) complex is involved in the ribosome-associated quality control (RQC) pathway, which mediates the extraction of incompletely synthesized nascent chains from stalled ribosomes: CRL2(KLHDC10) acts downstream of NEMF and recognizes CAT tails associated with stalled nascent chains, leading to their ubiquitination and degradation. Participates in the oxidative stress-induced cell death through MAP3K5 activation. Inhibits PPP5C phosphatase activity on MAP3K5. Acts as a regulator of necroptosis. This is Kelch domain-containing protein 10 from Homo sapiens (Human).